We begin with the raw amino-acid sequence, 99 residues long: Acylphosphatase-1 (99 aa).

One can recognise an Acylphosphatase-like domain in the interval Ser-9–Lys-99. Residues Arg-24 and Asn-42 contribute to the active site.

This sequence belongs to the acylphosphatase family.

It catalyses the reaction an acyl phosphate + H2O = a carboxylate + phosphate + H(+). This Xenopus laevis (African clawed frog) protein is Acylphosphatase-1 (acyp1).